The sequence spans 440 residues: Glutamyl-tRNA reductase (440 aa).

Substrate is bound by residues 50 to 53 (TCNR), serine 109, 114 to 116 (EPQ), and glutamine 120. The active-site Nucleophile is cysteine 51. 189–194 (GAGEMA) is an NADP(+) binding site.

The protein belongs to the glutamyl-tRNA reductase family. Homodimer.

It carries out the reaction (S)-4-amino-5-oxopentanoate + tRNA(Glu) + NADP(+) = L-glutamyl-tRNA(Glu) + NADPH + H(+). It participates in porphyrin-containing compound metabolism; protoporphyrin-IX biosynthesis; 5-aminolevulinate from L-glutamyl-tRNA(Glu): step 1/2. In terms of biological role, catalyzes the NADPH-dependent reduction of glutamyl-tRNA(Glu) to glutamate 1-semialdehyde (GSA). This chain is Glutamyl-tRNA reductase, found in Nitratidesulfovibrio vulgaris (strain ATCC 29579 / DSM 644 / CCUG 34227 / NCIMB 8303 / VKM B-1760 / Hildenborough) (Desulfovibrio vulgaris).